The chain runs to 129 residues: Small ribosomal subunit protein uS11 (129 aa).

It belongs to the universal ribosomal protein uS11 family. Part of the 30S ribosomal subunit. Interacts with proteins S7 and S18. Binds to IF-3.

Its function is as follows. Located on the platform of the 30S subunit, it bridges several disparate RNA helices of the 16S rRNA. Forms part of the Shine-Dalgarno cleft in the 70S ribosome. The polypeptide is Small ribosomal subunit protein uS11 (Limosilactobacillus reuteri (strain DSM 20016) (Lactobacillus reuteri)).